Here is a 365-residue protein sequence, read N- to C-terminus: uncharacterized protein (365 aa).

One can recognise a Radical SAM core domain in the interval 45–289 (FSIGKSLTII…LKEVKKSNPK (245 aa)). C60, C68, and C71 together coordinate [4Fe-4S] cluster.

[4Fe-4S] cluster serves as cofactor.

This is an uncharacterized protein from Methanocaldococcus jannaschii (strain ATCC 43067 / DSM 2661 / JAL-1 / JCM 10045 / NBRC 100440) (Methanococcus jannaschii).